The primary structure comprises 286 residues: Phycobilisome 32.1 kDa linker polypeptide, phycocyanin-associated, rod (286 aa).

The PBS-linker domain occupies 2-180 (AITAAASRLG…LYRGYANSDR (179 aa)). One can recognise a CpcD-like domain in the interval 234 to 286 (DRVYRIEVTGVRSPGYPSVRRSSYAIIVPYERLSEKIQQIHKLGGKIVSITSA).

The protein belongs to the phycobilisome linker protein family.

It is found in the cellular thylakoid membrane. Rod linker protein, associated with phycocyanin. Linker polypeptides determine the state of aggregation and the location of the disk-shaped phycobiliprotein units within the phycobilisome and modulate their spectroscopic properties in order to mediate a directed and optimal energy transfer. In Mastigocladus laminosus (Fischerella sp.), this protein is Phycobilisome 32.1 kDa linker polypeptide, phycocyanin-associated, rod (cpcC).